We begin with the raw amino-acid sequence, 96 residues long: Small ribosomal subunit protein bS16m (96 aa).

This sequence belongs to the bacterial ribosomal protein bS16 family. In terms of assembly, component of the mitochondrial small ribosomal subunit (mt-SSU). Mature yeast 74S mitochondrial ribosomes consist of a small (37S) and a large (54S) subunit. The 37S small subunit contains a 15S ribosomal RNA (15S mt-rRNA) and at least 32 different proteins. The 54S large subunit contains a 21S rRNA (21S mt-rRNA) and at least 45 different proteins.

The protein localises to the mitochondrion. Component of the mitochondrial ribosome (mitoribosome), a dedicated translation machinery responsible for the synthesis of mitochondrial genome-encoded proteins, including at least some of the essential transmembrane subunits of the mitochondrial respiratory chain. The mitoribosomes are attached to the mitochondrial inner membrane and translation products are cotranslationally integrated into the membrane. The polypeptide is Small ribosomal subunit protein bS16m (mrps16) (Schizosaccharomyces pombe (strain 972 / ATCC 24843) (Fission yeast)).